The sequence spans 163 residues: ATP synthase subunit b 1 (163 aa).

Residues 7–27 (AETWVAIAFVILLGVFAYLGV) form a helical membrane-spanning segment.

Belongs to the ATPase B chain family. In terms of assembly, F-type ATPases have 2 components, F(1) - the catalytic core - and F(0) - the membrane proton channel. F(1) has five subunits: alpha(3), beta(3), gamma(1), delta(1), epsilon(1). F(0) has three main subunits: a(1), b(2) and c(10-14). The alpha and beta chains form an alternating ring which encloses part of the gamma chain. F(1) is attached to F(0) by a central stalk formed by the gamma and epsilon chains, while a peripheral stalk is formed by the delta and b chains.

The protein resides in the cell inner membrane. Its function is as follows. F(1)F(0) ATP synthase produces ATP from ADP in the presence of a proton or sodium gradient. F-type ATPases consist of two structural domains, F(1) containing the extramembraneous catalytic core and F(0) containing the membrane proton channel, linked together by a central stalk and a peripheral stalk. During catalysis, ATP synthesis in the catalytic domain of F(1) is coupled via a rotary mechanism of the central stalk subunits to proton translocation. Component of the F(0) channel, it forms part of the peripheral stalk, linking F(1) to F(0). The polypeptide is ATP synthase subunit b 1 (Rhodopseudomonas palustris (strain ATCC BAA-98 / CGA009)).